A 436-amino-acid polypeptide reads, in one-letter code: Xylose isomerase (436 aa).

Residues His100 and Asp103 contribute to the active site. Positions 231, 267, 270, 295, 306, 308, and 338 each coordinate Mg(2+).

Belongs to the xylose isomerase family. As to quaternary structure, homotetramer. Mg(2+) is required as a cofactor.

Its subcellular location is the cytoplasm. The enzyme catalyses alpha-D-xylose = alpha-D-xylulofuranose. The protein is Xylose isomerase of Rhizobium etli (strain CIAT 652).